Consider the following 242-residue polypeptide: Floral homeotic protein AGAMOUS (242 aa).

An MADS-box domain is found at 19-73 (RGKIEIKRIENTTNRQVTFCKRRNGLLKKAYELSVLCDAEVALIVFSTRGRLYEY). Residues 103-193 (AQFYQQEASK…RAKIAENERA (91 aa)) form the K-box domain.

Flower. Preferentially expressed in stamen and carpel and weakly in petal. Undetected in leaves and roots.

It localises to the nucleus. Probable transcription factor involved in regulating genes that determines stamen and carpel development in wild-type flowers. This is Floral homeotic protein AGAMOUS (AG2) from Panax ginseng (Korean ginseng).